The chain runs to 293 residues: Adenylyl-sulfate kinase 2, chloroplastic (293 aa).

The N-terminal 59 residues, 1–59 (MEGLAIRASRPSVFCSIPGLGGDSHRKPPSDGFLKLPASSIPADSRKLVANSTSFHPIS), are a transit peptide targeting the chloroplast. 122–130 (GLSGSGKST) lines the ATP pocket. Substrate contacts are provided by residues D152, R155, R169, N172, 195–196 (IS), and G245. The active-site Phosphoserine intermediate is S196.

The protein belongs to the APS kinase family. As to quaternary structure, interacts with APK1. In terms of tissue distribution, expressed in root vasculature, root tips, leaf epidermal cells and funiculus of developing seeds.

The protein resides in the plastid. Its subcellular location is the chloroplast. It carries out the reaction adenosine 5'-phosphosulfate + ATP = 3'-phosphoadenylyl sulfate + ADP + H(+). Its pathway is sulfur metabolism; hydrogen sulfide biosynthesis; sulfite from sulfate: step 2/3. Catalyzes the synthesis of activated sulfate. Essential for plant reproduction and viability. Required for the production of glucosinolates. This is Adenylyl-sulfate kinase 2, chloroplastic (APK2) from Arabidopsis thaliana (Mouse-ear cress).